The following is a 423-amino-acid chain: Histidine--tRNA ligase (423 aa).

It belongs to the class-II aminoacyl-tRNA synthetase family. As to quaternary structure, homodimer.

It is found in the cytoplasm. The catalysed reaction is tRNA(His) + L-histidine + ATP = L-histidyl-tRNA(His) + AMP + diphosphate + H(+). The sequence is that of Histidine--tRNA ligase from Actinobacillus succinogenes (strain ATCC 55618 / DSM 22257 / CCUG 43843 / 130Z).